Here is a 337-residue protein sequence, read N- to C-terminus: MTLQIGVIGCGAIGQDHIRRLTRTLSGARVVAVNDIDPQQARDAVTKYGLDAEIYGDGHEVVAAADVQAVLVTSWGPTHEAFVLDAIAHGKPVFCEKPLAVTAEGCMRIVEAEVAHGKRLVQVGFMRPYDEGYRALKRVIDSGEIGAPLMLHCAHRNQSVGERYTTDMAITDTLIHELDVLRWLLGEDYVSTQVVYPKKTRHASSHLADPQIVLLETASGVRIDVEIFVNCQYGYDIQCEVVGEQGIAKLPDPPAVGLKHGARQSVEIMTDWKERFIASYDVELQAFIDGVRAHALTGPSAWDGYAAAVAADACVRAQKSGAVEPIAMAERPAFYRG.

The protein belongs to the Gfo/Idh/MocA family. Homotetramer.

The enzyme catalyses myo-inositol + NAD(+) = scyllo-inosose + NADH + H(+). Functionally, involved in the oxidation of myo-inositol (MI) to 2-keto-myo-inositol (2KMI or 2-inosose). This is Inositol 2-dehydrogenase from Burkholderia lata (strain ATCC 17760 / DSM 23089 / LMG 22485 / NCIMB 9086 / R18194 / 383).